The chain runs to 337 residues: Glyceraldehyde-3-phosphate dehydrogenase (337 aa).

NAD(+)-binding positions include R12–I13, D34, R78, and T121. Residues S151 to T153, T182, R199, S212 to G213, and R235 contribute to the D-glyceraldehyde 3-phosphate site. C152 acts as the Nucleophile in catalysis. N317 contributes to the NAD(+) binding site.

Belongs to the glyceraldehyde-3-phosphate dehydrogenase family. Homotetramer.

The protein resides in the cytoplasm. The enzyme catalyses D-glyceraldehyde 3-phosphate + phosphate + NAD(+) = (2R)-3-phospho-glyceroyl phosphate + NADH + H(+). It participates in carbohydrate degradation; glycolysis; pyruvate from D-glyceraldehyde 3-phosphate: step 1/5. Its function is as follows. Catalyzes the oxidative phosphorylation of glyceraldehyde 3-phosphate (G3P) to 1,3-bisphosphoglycerate (BPG) using the cofactor NAD. The first reaction step involves the formation of a hemiacetal intermediate between G3P and a cysteine residue, and this hemiacetal intermediate is then oxidized to a thioester, with concomitant reduction of NAD to NADH. The reduced NADH is then exchanged with the second NAD, and the thioester is attacked by a nucleophilic inorganic phosphate to produce BPG. This Lactococcus lactis subsp. lactis (strain IL1403) (Streptococcus lactis) protein is Glyceraldehyde-3-phosphate dehydrogenase (gap).